The chain runs to 194 residues: ATP-dependent Clp protease proteolytic subunit (194 aa).

Ser-98 acts as the Nucleophile in catalysis. The active site involves His-123.

The protein belongs to the peptidase S14 family. As to quaternary structure, fourteen ClpP subunits assemble into 2 heptameric rings which stack back to back to give a disk-like structure with a central cavity, resembling the structure of eukaryotic proteasomes.

It localises to the cytoplasm. The enzyme catalyses Hydrolysis of proteins to small peptides in the presence of ATP and magnesium. alpha-casein is the usual test substrate. In the absence of ATP, only oligopeptides shorter than five residues are hydrolyzed (such as succinyl-Leu-Tyr-|-NHMec, and Leu-Tyr-Leu-|-Tyr-Trp, in which cleavage of the -Tyr-|-Leu- and -Tyr-|-Trp bonds also occurs).. Cleaves peptides in various proteins in a process that requires ATP hydrolysis. Has a chymotrypsin-like activity. Plays a major role in the degradation of misfolded proteins. This is ATP-dependent Clp protease proteolytic subunit from Wigglesworthia glossinidia brevipalpis.